The chain runs to 573 residues: Adenine deaminase (573 aa).

This sequence belongs to the metallo-dependent hydrolases superfamily. Adenine deaminase family. The cofactor is Mn(2+).

It catalyses the reaction adenine + H2O + H(+) = hypoxanthine + NH4(+). This Bacillus licheniformis (strain ATCC 14580 / DSM 13 / JCM 2505 / CCUG 7422 / NBRC 12200 / NCIMB 9375 / NCTC 10341 / NRRL NRS-1264 / Gibson 46) protein is Adenine deaminase.